A 429-amino-acid polypeptide reads, in one-letter code: Nocturnin (429 aa).

The N-terminal 73 residues, 1-73 (MYQSPRRLCS…SMGNGTSRLY (73 aa)), are a transit peptide targeting the mitochondrion. Residues 21 to 68 (RRTLVPGPRRTLAPPVLGSRPKSPQLQAAAASGAARSRPRTVSSMGNG) form a disordered region. Glu193 serves as a coordination point for Mg(2+). Substrate is bound by residues Glu193, 217 to 219 (KPW), Asn261, 284 to 287 (HLKA), and 322 to 324 (DFN). An interaction with PPARG region spans residues 341 to 351 (NLNSAYKLLSP). A substrate-binding site is contributed by His412.

This sequence belongs to the CCR4/nocturin family. In terms of assembly, interacts with PPARG. Mg(2+) is required as a cofactor. In terms of tissue distribution, highly expressed in the differentiated adipocyte (at protein level). Ubiquitous.

The protein resides in the cytoplasm. Its subcellular location is the nucleus. The protein localises to the perinuclear region. It is found in the mitochondrion. It catalyses the reaction NADP(+) + H2O = phosphate + NAD(+). The enzyme catalyses NADPH + H2O = phosphate + NADH. Its function is as follows. Phosphatase which catalyzes the conversion of NADP(+) to NAD(+) and of NADPH to NADH. Shows a small preference for NADPH over NADP(+). Represses translation and promotes degradation of target mRNA molecules. Plays an important role in post-transcriptional regulation of metabolic genes under circadian control. Exerts a rhythmic post-transcriptional control of genes necessary for metabolic functions including nutrient absorption, glucose/insulin sensitivity, lipid metabolism, adipogenesis, inflammation and osteogenesis. Plays an important role in favoring adipogenesis over osteoblastogenesis and acts as a key regulator of the adipogenesis/osteogenesis balance. Promotes adipogenesis by facilitating PPARG nuclear translocation which activates its transcriptional activity. Regulates circadian expression of NOS2 in the liver and negatively regulates the circadian expression of IGF1 in the bone. Critical for proper development of early embryos. In Mus musculus (Mouse), this protein is Nocturnin.